The primary structure comprises 735 residues: Trafficking protein particle complex subunit 12 (735 aa).

2 disordered regions span residues 1 to 204 (MEDA…QPSP) and 237 to 276 (NPGA…PPAS). The span at 13-22 (PEAPHPPQLA) shows a compositional bias: pro residues. The segment covering 34-50 (ETIDLGGDEFGSEENET) has biased composition (acidic residues). 2 positions are modified to phosphoserine: S109 and S184. 4 TPR repeats span residues 545 to 578 (GRVM…YPEQ), 580 to 613 (PQLL…TQKL), 620 to 653 (IMVL…DPRN), and 654 to 687 (AVAN…DPRH).

As to quaternary structure, component of the multisubunit TRAPP (transport protein particle) complex, which includes at least TRAPPC2, TRAPPC2L, TRAPPC3, TRAPPC3L, TRAPPC4, TRAPPC5, TRAPPC8, TRAPPC9, TRAPPC10, TRAPPC11 and TRAPPC12. Interacts with CENPE. In terms of processing, phosphorylated as the cells enter mitosis but is dephosphorylated at or before the onset of anaphase. The phosphorylated form recruits CENPE to kinetochores more efficiently than the non-phosphorylated form.

The protein resides in the endoplasmic reticulum-Golgi intermediate compartment. The protein localises to the nucleus. Component of the TRAPP complex, which is involved in endoplasmic reticulum to Golgi apparatus trafficking at a very early stage. Also plays a role in chromosome congression, kinetochore assembly and stability and controls the recruitment of CENPE to the kinetochores. In Homo sapiens (Human), this protein is Trafficking protein particle complex subunit 12.